The chain runs to 100 residues: Urease subunit gamma (100 aa).

It belongs to the urease gamma subunit family. As to quaternary structure, heterotrimer of UreA (gamma), UreB (beta) and UreC (alpha) subunits. Three heterotrimers associate to form the active enzyme.

It is found in the cytoplasm. It catalyses the reaction urea + 2 H2O + H(+) = hydrogencarbonate + 2 NH4(+). Its pathway is nitrogen metabolism; urea degradation; CO(2) and NH(3) from urea (urease route): step 1/1. The sequence is that of Urease subunit gamma from Proteus hauseri.